Reading from the N-terminus, the 272-residue chain is MKPMPDQTDILPATADPIPAELLELLSEPRLVVEPGVAARVAAVAGPVLHGMGYRLVRIKVSGELGCTVQIMAERPDGTMLIEDCEAISKALSPVLDVADPIDKAYRLEVSSPGIDRPLVRRSDFERYAGYLVKIDMAVPHQGRKRFRGILGGIEGDAVHLQREGVRGDDDPAVLLTIEDISDARLVLTDELIAESMRRGKIAEREMKQNLGILPPPPPHAKKSDPTKSNAPKPKAAKAKSKVAKTPPKNTKEHRLAAERLRRGDIDPPEGD.

The segment at 209-272 (QNLGILPPPP…RGDIDPPEGD (64 aa)) is disordered. Over residues 250-266 (NTKEHRLAAERLRRGDI) the composition is skewed to basic and acidic residues.

It belongs to the RimP family.

The protein resides in the cytoplasm. In terms of biological role, required for maturation of 30S ribosomal subunits. The chain is Ribosome maturation factor RimP from Rhodopseudomonas palustris (strain BisA53).